A 169-amino-acid polypeptide reads, in one-letter code: Large ribosomal subunit protein uL10 (169 aa).

This sequence belongs to the universal ribosomal protein uL10 family. As to quaternary structure, part of the ribosomal stalk of the 50S ribosomal subunit. The N-terminus interacts with L11 and the large rRNA to form the base of the stalk. The C-terminus forms an elongated spine to which L12 dimers bind in a sequential fashion forming a multimeric L10(L12)X complex.

In terms of biological role, forms part of the ribosomal stalk, playing a central role in the interaction of the ribosome with GTP-bound translation factors. The polypeptide is Large ribosomal subunit protein uL10 (Rickettsia felis (strain ATCC VR-1525 / URRWXCal2) (Rickettsia azadi)).